A 365-amino-acid polypeptide reads, in one-letter code: Annexin B22 (365 aa).

Annexin repeat units follow at residues 34–105 (FSAS…QLIV), 106–185 (DTPY…SLVQ), 211–283 (ELAE…AVLR), and 287–358 (DRPS…VLMG). The Ca(2+) site is built by M47, G49, G51, T52, E54, D91, M119, G121, G123, D126, K169, E171, T172, E177, D273, M300, G302, L303, G304, and D344.

Belongs to the annexin family. In terms of assembly, homodimer.

It localises to the tegument. It is found in the secreted. The protein localises to the extracellular exosome. The protein resides in the host cell. Functionally, involved in reproduction of the worm. Involved in host-parasite interaction. Delivered into the host cell by means of parasite exosomes. Binds to acidic phospholipid membranes in a calcium-dependent manner in vitro. Causes aggregation of liposomes in the presence of calcium, but not in its absence. Likely to promote membrane fusion. May provide structural integrity within the tegument. This Schistosoma mansoni (Blood fluke) protein is Annexin B22.